The sequence spans 322 residues: 2-methylene-furan-3-one reductase (322 aa).

Residues Lys59, 174–175 (GV), 197–200 (STKK), Tyr215, Ile253, 264–266 (FVL), 311–312 (RA), and 311–322 (RATGKVVVYPIP) contribute to the NADP(+) site. Substrate is bound at residue Lys59.

This sequence belongs to the zinc-containing alcohol dehydrogenase family. Quinone oxidoreductase subfamily. As to quaternary structure, monomer. The N-terminus is blocked.

It carries out the reaction 4-hydroxy-2,5-dimethyl-furan-3(2H)-one + NADP(+) = 4-hydroxy-5-methyl-2-methylenefuran-3(2H)-one + NADPH + H(+). In terms of biological role, enone oxidoreductase involved in the biosynthesis of 4-hydroxy-2,5-dimethyl-3(2H)-furanone (HDMF or furaneol), the key flavor compound in strawberries. Can use both NADH and NADPH as the electron donor. The protein is 2-methylene-furan-3-one reductase (EO) of Fragaria ananassa (Strawberry).